The sequence spans 255 residues: Imidazole glycerol phosphate synthase subunit HisF (255 aa).

Residues D11 and D130 contribute to the active site.

This sequence belongs to the HisA/HisF family. In terms of assembly, heterodimer of HisH and HisF.

The protein localises to the cytoplasm. It catalyses the reaction 5-[(5-phospho-1-deoxy-D-ribulos-1-ylimino)methylamino]-1-(5-phospho-beta-D-ribosyl)imidazole-4-carboxamide + L-glutamine = D-erythro-1-(imidazol-4-yl)glycerol 3-phosphate + 5-amino-1-(5-phospho-beta-D-ribosyl)imidazole-4-carboxamide + L-glutamate + H(+). It functions in the pathway amino-acid biosynthesis; L-histidine biosynthesis; L-histidine from 5-phospho-alpha-D-ribose 1-diphosphate: step 5/9. IGPS catalyzes the conversion of PRFAR and glutamine to IGP, AICAR and glutamate. The HisF subunit catalyzes the cyclization activity that produces IGP and AICAR from PRFAR using the ammonia provided by the HisH subunit. This is Imidazole glycerol phosphate synthase subunit HisF from Campylobacter jejuni (strain RM1221).